The chain runs to 127 residues: Protein ApaG (127 aa).

One can recognise an ApaG domain in the interval 2–127; it reads SELVEHIQVH…FRLAGPNQVH (126 aa).

This is Protein ApaG from Chromohalobacter salexigens (strain ATCC BAA-138 / DSM 3043 / CIP 106854 / NCIMB 13768 / 1H11).